The primary structure comprises 87 residues: Large ribosomal subunit protein eL33 (87 aa).

This sequence belongs to the eukaryotic ribosomal protein eL33 family.

This chain is Large ribosomal subunit protein eL33, found in Pyrococcus woesei.